A 553-amino-acid polypeptide reads, in one-letter code: ATP synthase F(1) complex subunit alpha, mitochondrial (553 aa).

Residues 1-43 constitute a mitochondrion transit peptide; sequence MLSVRVAAAVARALPRRAGLVSKNALGSSFIAARNLHASNSRL. A Pyrrolidone carboxylic acid modification is found at Q44. S53 and S65 each carry phosphoserine. Residue S76 is modified to Phosphoserine; alternate. An O-linked (GlcNAc) serine; alternate glycan is attached at S76. S106 carries the post-translational modification Phosphoserine. K123, K126, and K132 each carry N6-acetyllysine. T134 carries the phosphothreonine modification. The residue at position 161 (K161) is an N6-acetyllysine; alternate. N6-succinyllysine; alternate is present on K161. S166 is modified (phosphoserine). An N6-acetyllysine; alternate modification is found at K167. N6-succinyllysine; alternate is present on K167. S184 is modified (phosphoserine). Residue R204 is modified to Omega-N-methylarginine. The ATP site is built by Q215, G217, K218, T219, and S220. T219 contributes to the Mg(2+) binding site. N6-acetyllysine; alternate occurs at positions 230 and 239. N6-succinyllysine; alternate occurs at positions 230 and 239. The residue at position 240 (K240) is an N6-acetyllysine. 2 positions are modified to N6-acetyllysine; alternate: K261 and K305. An N6-succinyllysine; alternate mark is found at K261 and K305. D312 serves as a coordination point for Mg(2+). N6-acetyllysine; alternate is present on K427. An N6-succinyllysine; alternate modification is found at K427. Residue K434 is modified to N6-acetyllysine. The ATP site is built by Q473 and Q475. N6-acetyllysine; alternate occurs at positions 498, 506, 531, and 539. N6-succinyllysine; alternate occurs at positions 498, 506, 531, and 539. N6-acetyllysine is present on K541.

The protein belongs to the ATPase alpha/beta chains family. As to quaternary structure, homotrimer. Component of the ATP synthase complex composed at least of ATP5F1A/subunit alpha, ATP5F1B/subunit beta, ATP5MC1/subunit c (homooctomer), MT-ATP6/subunit a, MT-ATP8/subunit 8, ATP5ME/subunit e, ATP5MF/subunit f, ATP5MG/subunit g, ATP5MK/subunit k, ATP5MJ/subunit j, ATP5F1C/subunit gamma, ATP5F1D/subunit delta, ATP5F1E/subunit epsilon, ATP5PF/subunit F6, ATP5PB/subunit b, ATP5PD/subunit d, ATP5PO/subunit OSCP. ATP synthase complex consists of a soluble F(1) head domain (subunits alpha(3) and beta(3)) - the catalytic core - and a membrane F(0) domain - the membrane proton channel (subunits c, a, 8, e, f, g, k and j). These two domains are linked by a central stalk (subunits gamma, delta, and epsilon) rotating inside the F1 region and a stationary peripheral stalk (subunits F6, b, d, and OSCP). Interacts with ATPAF2. Interacts with HRG; the interaction occurs on the surface of T-cells and alters the cell morphology when associated with concanavalin (in vitro). Interacts with PLG (angiostatin peptide); the interaction inhibits most of the angiogenic properties of angiostatin. Interacts with BLOC1S1. Interacts with BCL2L1 isoform BCL-X(L); the interaction mediates the association of BCL2L1 isoform BCL-X(L) with the mitochondrial membrane F(1)F(0) ATP synthase and enhances neurons metabolic efficiency. Interacts with CLN5 and PPT1. Interacts with S100A1; this interaction increases F1-ATPase activity. Interacts with ABCB7; this interaction allows the regulation of cellular iron homeostasis and cellular reactive oxygen species (ROS) levels in cardiomyocytes. Post-translationally, acetylated on lysine residues. BLOC1S1 is required for acetylation. In terms of tissue distribution, heart muscle (at protein level). Heart and liver.

The protein resides in the mitochondrion inner membrane. It localises to the cell membrane. In terms of biological role, subunit alpha, of the mitochondrial membrane ATP synthase complex (F(1)F(0) ATP synthase or Complex V) that produces ATP from ADP in the presence of a proton gradient across the membrane which is generated by electron transport complexes of the respiratory chain. ATP synthase complex consist of a soluble F(1) head domain - the catalytic core - and a membrane F(1) domain - the membrane proton channel. These two domains are linked by a central stalk rotating inside the F(1) region and a stationary peripheral stalk. During catalysis, ATP synthesis in the catalytic domain of F(1) is coupled via a rotary mechanism of the central stalk subunits to proton translocation. In vivo, can only synthesize ATP although its ATP hydrolase activity can be activated artificially in vitro. With the catalytic subunit beta (ATP5F1B), forms the catalytic core in the F(1) domain. Subunit alpha does not bear the catalytic high-affinity ATP-binding sites. The chain is ATP synthase F(1) complex subunit alpha, mitochondrial from Bos taurus (Bovine).